Here is a 319-residue protein sequence, read N- to C-terminus: Nuclear hormone receptor family member nhr-174 (319 aa).

The segment at residues 7–81 is a DNA-binding region (nuclear receptor); that stretch reads DPVCPVCEFP…AGMKRNLVRQ (75 aa). 2 consecutive NR C4-type zinc fingers follow at residues 10–31 and 47–63; these read CPVC…CGAC and CEKK…CRAC. The region spanning 130 to 319 is the NR LBD domain; it reads EAEKDVSKIL…SMKKSRYLQF (190 aa).

This sequence belongs to the nuclear hormone receptor family.

The protein resides in the nucleus. In terms of biological role, orphan nuclear receptor. In Caenorhabditis elegans, this protein is Nuclear hormone receptor family member nhr-174 (nhr-174).